Consider the following 622-residue polypeptide: Low affinity potassium transport system protein Kup (622 aa).

The next 12 helical transmembrane spans lie at 9 to 29 (LPAI…TSPL), 49 to 69 (VFGF…IKYL), 103 to 123 (VIMG…TPAI), 137 to 157 (PQLD…LFMI), 165 to 185 (VGKL…GLGL), 213 to 233 (VSFI…ALYA), 247 to 267 (WFTV…ALLL), 276 to 296 (PFFL…AALA), 337 to 357 (IYIP…IVSF), 363 to 383 (LAAA…ILST), 396 to 416 (FVAL…TANL), and 419 to 439 (LLSG…VMTT).

This sequence belongs to the HAK/KUP transporter (TC 2.A.72) family.

The protein localises to the cell inner membrane. The catalysed reaction is K(+)(in) + H(+)(in) = K(+)(out) + H(+)(out). Its function is as follows. Responsible for the low-affinity transport of potassium into the cell. Likely operates as a K(+):H(+) symporter. This chain is Low affinity potassium transport system protein Kup, found in Escherichia fergusonii (strain ATCC 35469 / DSM 13698 / CCUG 18766 / IAM 14443 / JCM 21226 / LMG 7866 / NBRC 102419 / NCTC 12128 / CDC 0568-73).